A 1057-amino-acid chain; its full sequence is Carbamoyl phosphate synthase large chain (1057 aa).

Residues 1-401 form a carboxyphosphate synthetic domain region; sequence MPKRNDIKTI…SLLKAIRSLE (401 aa). 12 residues coordinate ATP: Arg-129, Arg-169, Gly-175, Gly-176, Lys-208, Ile-210, Glu-215, Gly-241, Ile-242, His-243, Gln-284, and Glu-298. An ATP-grasp 1 domain is found at 133–327; it reads RTLMNDLNVP…IAKLAAKIAV (195 aa). Positions 284, 298, and 300 each coordinate Mg(2+). Mn(2+) is bound by residues Gln-284, Glu-298, and Asn-300. Residues 402–546 form an oligomerization domain region; the sequence is YGVHHLGLPN…YGTYETENES (145 aa). Residues 547 to 929 are carbamoyl phosphate synthetic domain; sequence IVTDKEKILV…ALFKGLTGSG (383 aa). One can recognise an ATP-grasp 2 domain in the interval 671 to 861; that stretch reads EALLRKINVP…MAQLAMRAII (191 aa). Residues Arg-707, Arg-746, Leu-748, Glu-752, Gly-777, Val-778, His-779, Ser-780, Gln-820, and Glu-832 each contribute to the ATP site. Residues Gln-820, Glu-832, and Asn-834 each coordinate Mg(2+). Positions 820, 832, and 834 each coordinate Mn(2+). The MGS-like domain occupies 930–1057; it reads VEVKDHGTVL…ESMTFTMRQM (128 aa). Residues 930-1057 form an allosteric domain region; sequence VEVKDHGTVL…ESMTFTMRQM (128 aa).

Belongs to the CarB family. In terms of assembly, composed of two chains; the small (or glutamine) chain promotes the hydrolysis of glutamine to ammonia, which is used by the large (or ammonia) chain to synthesize carbamoyl phosphate. Tetramer of heterodimers (alpha,beta)4. Mg(2+) serves as cofactor. The cofactor is Mn(2+).

The catalysed reaction is hydrogencarbonate + L-glutamine + 2 ATP + H2O = carbamoyl phosphate + L-glutamate + 2 ADP + phosphate + 2 H(+). It catalyses the reaction hydrogencarbonate + NH4(+) + 2 ATP = carbamoyl phosphate + 2 ADP + phosphate + 2 H(+). It participates in amino-acid biosynthesis; L-arginine biosynthesis; carbamoyl phosphate from bicarbonate: step 1/1. The protein operates within pyrimidine metabolism; UMP biosynthesis via de novo pathway; (S)-dihydroorotate from bicarbonate: step 1/3. Functionally, large subunit of the glutamine-dependent carbamoyl phosphate synthetase (CPSase). CPSase catalyzes the formation of carbamoyl phosphate from the ammonia moiety of glutamine, carbonate, and phosphate donated by ATP, constituting the first step of 2 biosynthetic pathways, one leading to arginine and/or urea and the other to pyrimidine nucleotides. The large subunit (synthetase) binds the substrates ammonia (free or transferred from glutamine from the small subunit), hydrogencarbonate and ATP and carries out an ATP-coupled ligase reaction, activating hydrogencarbonate by forming carboxy phosphate which reacts with ammonia to form carbamoyl phosphate. This Staphylococcus aureus (strain USA300 / TCH1516) protein is Carbamoyl phosphate synthase large chain.